Consider the following 740-residue polypeptide: Eukaryotic translation initiation factor 3 subunit B (740 aa).

A compositionally biased stretch (polar residues) spans 1 to 10 (MAPSFDTLTE). Residues 1 to 22 (MAPSFDTLTEQDLHEEEEEEID) are disordered. The span at 13–22 (LHEEEEEEID) shows a compositional bias: acidic residues. Residues 40–126 (TFVVIDGLPV…HTLAVNKLMD (87 aa)) form the RRM domain. 5 WD repeats span residues 193–230 (AHWT…KQKQ), 232–289 (PHPF…RSFV), 302–343 (EPKK…LLGK), 513–556 (IEKK…EKPE), and 571–609 (VEHY…HTFA). The segment at 695–721 (DAYGVPEDVDSSKQAKDAPAVSEDQGE) is disordered.

It belongs to the eIF-3 subunit B family. Component of the eukaryotic translation initiation factor 3 (eIF-3) complex.

The protein resides in the cytoplasm. Functionally, RNA-binding component of the eukaryotic translation initiation factor 3 (eIF-3) complex, which is involved in protein synthesis of a specialized repertoire of mRNAs and, together with other initiation factors, stimulates binding of mRNA and methionyl-tRNAi to the 40S ribosome. The eIF-3 complex specifically targets and initiates translation of a subset of mRNAs involved in cell proliferation. The chain is Eukaryotic translation initiation factor 3 subunit B (prt1) from Aspergillus niger (strain ATCC MYA-4892 / CBS 513.88 / FGSC A1513).